The following is a 193-amino-acid chain: ER membrane protein complex subunit 4 (193 aa).

2 helical membrane-spanning segments follow: residues isoleucine 91–leucine 111 and leucine 137–tyrosine 157.

Belongs to the EMC4 family.

It localises to the endoplasmic reticulum membrane. In Schizosaccharomyces pombe (strain 972 / ATCC 24843) (Fission yeast), this protein is ER membrane protein complex subunit 4.